The primary structure comprises 285 residues: Putative sugar uptake protein lmo0424 (285 aa).

Helical transmembrane passes span 2–21 (SIYL…PIIA), 31–50 (QLLG…FWIL), 55–77 (TVLS…LLQF), 111–133 (WQTV…GVVM), 146–168 (SVSF…YVVT), 172–194 (FDVT…AIGI), 207–229 (VTFN…LATA), 233–255 (VATS…ILIF), and 262–284 (LEWT…LSLL).

This sequence belongs to the GRP transporter (TC 2.A.7.5) family.

The protein localises to the cell membrane. In Listeria monocytogenes serovar 1/2a (strain ATCC BAA-679 / EGD-e), this protein is Putative sugar uptake protein lmo0424.